Reading from the N-terminus, the 139-residue chain is Desampylase (139 aa).

The 134-residue stretch at 6–139 (LSLAADARDS…EFRELSVAVE (134 aa)) folds into the MPN domain. The active-site Proton donor/acceptor is the Glu-31. His-88, His-90, and Asp-101 together coordinate Zn(2+). Residues 88–101 (HSHPESDPVPSATD) carry the JAMM motif motif.

Belongs to the peptidase M67B family. As to quaternary structure, monomer. The cofactor is Zn(2+).

It catalyses the reaction an N(6)-[small archaeal modifier protein]-[protein]-L-lysine + H2O = a [protein]-L-lysine + a [small archaeal modifier protein].. Inhibited by EDTA and N-ethylmaleimide (NEM) in vitro. Its function is as follows. Metalloprotease that displays desampylase (DSAMP) activity, cleaving ubiquitin-like small archaeal modifier proteins (SAMP1, SAMP2 and SAMP3) from protein conjugates (isopeptide- and linear-linked). Thus, likely regulates sampylation and the pools of 'free' SAMP available for protein modification. Functions as a specific and not a general protease since it is unable to hydrolyze a variety of unmodified proteins otherwise hydrolyzed by proteinase K. The sequence is that of Desampylase from Haloferax volcanii (strain ATCC 29605 / DSM 3757 / JCM 8879 / NBRC 14742 / NCIMB 2012 / VKM B-1768 / DS2) (Halobacterium volcanii).